Reading from the N-terminus, the 113-residue chain is Large ribosomal subunit protein bL19 (113 aa).

The protein belongs to the bacterial ribosomal protein bL19 family.

Its function is as follows. This protein is located at the 30S-50S ribosomal subunit interface and may play a role in the structure and function of the aminoacyl-tRNA binding site. The sequence is that of Large ribosomal subunit protein bL19 from Mycobacterium sp. (strain JLS).